The chain runs to 193 residues: Xanthine phosphoribosyltransferase (193 aa).

Residues L20 and T27 each contribute to the xanthine site. Residue 128–132 participates in 5-phospho-alpha-D-ribose 1-diphosphate binding; that stretch reads ANGQA. K156 contacts xanthine.

The protein belongs to the purine/pyrimidine phosphoribosyltransferase family. Xpt subfamily. As to quaternary structure, homodimer.

The protein localises to the cytoplasm. It catalyses the reaction XMP + diphosphate = xanthine + 5-phospho-alpha-D-ribose 1-diphosphate. It functions in the pathway purine metabolism; XMP biosynthesis via salvage pathway; XMP from xanthine: step 1/1. In terms of biological role, converts the preformed base xanthine, a product of nucleic acid breakdown, to xanthosine 5'-monophosphate (XMP), so it can be reused for RNA or DNA synthesis. The protein is Xanthine phosphoribosyltransferase of Streptococcus pneumoniae serotype 2 (strain D39 / NCTC 7466).